The primary structure comprises 443 residues: Thymidine phosphorylase (443 aa).

It belongs to the thymidine/pyrimidine-nucleoside phosphorylase family. Homodimer.

It carries out the reaction thymidine + phosphate = 2-deoxy-alpha-D-ribose 1-phosphate + thymine. It functions in the pathway pyrimidine metabolism; dTMP biosynthesis via salvage pathway; dTMP from thymine: step 1/2. Its function is as follows. The enzymes which catalyze the reversible phosphorolysis of pyrimidine nucleosides are involved in the degradation of these compounds and in their utilization as carbon and energy sources, or in the rescue of pyrimidine bases for nucleotide synthesis. This chain is Thymidine phosphorylase, found in Shewanella baltica (strain OS155 / ATCC BAA-1091).